The sequence spans 102 residues: Large ribosomal subunit protein uL24 (102 aa).

This sequence belongs to the universal ribosomal protein uL24 family. As to quaternary structure, part of the 50S ribosomal subunit.

Its function is as follows. One of two assembly initiator proteins, it binds directly to the 5'-end of the 23S rRNA, where it nucleates assembly of the 50S subunit. One of the proteins that surrounds the polypeptide exit tunnel on the outside of the subunit. The chain is Large ribosomal subunit protein uL24 from Paraburkholderia xenovorans (strain LB400).